We begin with the raw amino-acid sequence, 90 residues long: Small ribosomal subunit protein bS16 (90 aa).

It belongs to the bacterial ribosomal protein bS16 family.

The protein is Small ribosomal subunit protein bS16 of Streptococcus sanguinis (strain SK36).